A 396-amino-acid polypeptide reads, in one-letter code: Ornithine aminotransferase (396 aa).

Lysine 255 is modified (N6-(pyridoxal phosphate)lysine).

The protein belongs to the class-III pyridoxal-phosphate-dependent aminotransferase family. OAT subfamily. The cofactor is pyridoxal 5'-phosphate.

The protein resides in the cytoplasm. The enzyme catalyses a 2-oxocarboxylate + L-ornithine = L-glutamate 5-semialdehyde + an L-alpha-amino acid. It functions in the pathway amino-acid biosynthesis; L-proline biosynthesis; L-glutamate 5-semialdehyde from L-ornithine: step 1/1. In terms of biological role, catalyzes the interconversion of ornithine to glutamate semialdehyde. The chain is Ornithine aminotransferase from Staphylococcus epidermidis (strain ATCC 35984 / DSM 28319 / BCRC 17069 / CCUG 31568 / BM 3577 / RP62A).